Reading from the N-terminus, the 221-residue chain is Abscisic acid receptor PYL1 (221 aa).

Positions 1–11 are enriched in low complexity; that stretch reads MANSESSSSPV. Positions 1–22 are disordered; that stretch reads MANSESSSSPVNEEENSQRIST. Position 2 is an N-acetylalanine (Ala2). An START-like region spans residues 50 to 206; that stretch reads YQLGNGRCSS…NLQKLASITE (157 aa). Abscisate-binding positions include Lys86, 116 to 121, 143 to 149, and Glu171; these read ANTSRE and RLRNYKS. A Gate loop motif is present at residues 112-116; it reads SGLPA. The short motif at 142 to 144 is the Latch loop element; that stretch reads HRL.

This sequence belongs to the PYR/PYL/RCAR abscisic acid intracellular receptor family. In terms of assembly, homodimer. Binds ABA on one subunit only. Interacts with HAB1, ABI1 and ABI2, and possibly with other PP2Cs. Binds to CARs protein in an ABA-independent manner, both at the plasma membrane and in the nucleus. Interacts directly with CAR1 and CAR4.

Its subcellular location is the cytoplasm. The protein localises to the nucleus. It localises to the cell membrane. Functionally, receptor for abscisic acid (ABA) required for ABA-mediated responses such as stomatal closure and germination inhibition. Inhibits the activity of group-A protein phosphatases type 2C (PP2Cs) when activated by ABA. Can be activated by both (-)-ABA and (+)-ABA. The sequence is that of Abscisic acid receptor PYL1 (PYL1) from Arabidopsis thaliana (Mouse-ear cress).